Consider the following 469-residue polypeptide: Neuraminidase (469 aa).

Over 1–9 (MNPNQKIIT) the chain is Intravirion. The helical transmembrane segment at 10 to 30 (IGSVSLTIATICFLMQIAILV) threads the bilayer. Positions 11-33 (GSVSLTIATICFLMQIAILVTTV) are involved in apical transport and lipid raft association. Residues 31–469 (TTVTLHFKQY…DGADINLMPI (439 aa)) lie on the Virion surface side of the membrane. Positions 36 to 88 (HFKQYECSSPPNNQVIPCQPTIIERNITEIVYLTNTTIEKEICPKLVEYRNWS) are hypervariable stalk region. N-linked (GlcNAc...) asparagine; by host glycosylation is found at Asn-61, Asn-70, and Asn-86. Positions 91 to 469 (QCKITGFAPF…DGADINLMPI (379 aa)) are head of neuraminidase. 8 disulfides stabilise this stretch: Cys-92–Cys-417, Cys-124–Cys-129, Cys-183–Cys-230, Cys-232–Cys-237, Cys-278–Cys-291, Cys-280–Cys-289, Cys-318–Cys-337, and Cys-421–Cys-447. Arg-118 lines the substrate pocket. Residue Asn-146 is glycosylated (N-linked (GlcNAc...) asparagine; by host). Catalysis depends on Asp-151, which acts as the Proton donor/acceptor. Residue Arg-152 coordinates substrate. N-linked (GlcNAc...) asparagine; by host glycans are attached at residues Asn-200 and Asn-234. 276–277 (EE) is a binding site for substrate. Arg-292 contacts substrate. Residues Asp-293, Gly-297, and Asp-324 each coordinate Ca(2+). The segment at 326–350 (PRKNDSSSSSYCQNPNNEKGSHGVK) is disordered. A glycan (N-linked (GlcNAc...) asparagine; by host) is linked at Asn-329. Polar residues predominate over residues 331-343 (SSSSSYCQNPNNE). A substrate-binding site is contributed by Arg-371. The N-linked (GlcNAc...) asparagine; by host glycan is linked to Asn-402. The active-site Nucleophile is Tyr-406.

It belongs to the glycosyl hydrolase 34 family. As to quaternary structure, homotetramer. Requires Ca(2+) as cofactor. Post-translationally, N-glycosylated.

It localises to the virion membrane. The protein resides in the host apical cell membrane. The enzyme catalyses Hydrolysis of alpha-(2-&gt;3)-, alpha-(2-&gt;6)-, alpha-(2-&gt;8)- glycosidic linkages of terminal sialic acid residues in oligosaccharides, glycoproteins, glycolipids, colominic acid and synthetic substrates.. With respect to regulation, inhibited by the neuraminidase inhibitors zanamivir (Relenza) and oseltamivir (Tamiflu). These drugs interfere with the release of progeny virus from infected cells and are effective against all influenza strains. Resistance to neuraminidase inhibitors is quite rare. Functionally, catalyzes the removal of terminal sialic acid residues from viral and cellular glycoconjugates. Cleaves off the terminal sialic acids on the glycosylated HA during virus budding to facilitate virus release. Additionally helps virus spread through the circulation by further removing sialic acids from the cell surface. These cleavages prevent self-aggregation and ensure the efficient spread of the progeny virus from cell to cell. Otherwise, infection would be limited to one round of replication. Described as a receptor-destroying enzyme because it cleaves a terminal sialic acid from the cellular receptors. May facilitate viral invasion of the upper airways by cleaving the sialic acid moieties on the mucin of the airway epithelial cells. Likely to plays a role in the budding process through its association with lipid rafts during intracellular transport. May additionally display a raft-association independent effect on budding. Plays a role in the determination of host range restriction on replication and virulence. Sialidase activity in late endosome/lysosome traffic seems to enhance virus replication. The sequence is that of Neuraminidase from Influenza A virus (strain A/Kitakyushu/159/1993 H3N2).